Here is a 562-residue protein sequence, read N- to C-terminus: Dihydroxy-acid dehydratase 1 (562 aa).

A Mg(2+)-binding site is contributed by D80. C121 contacts [2Fe-2S] cluster. The Mg(2+) site is built by D122 and K123. An N6-carboxylysine modification is found at K123. C194 serves as a coordination point for [2Fe-2S] cluster. Mg(2+) is bound at residue E446. The Proton acceptor role is filled by S472.

It belongs to the IlvD/Edd family. In terms of assembly, homodimer. Requires [2Fe-2S] cluster as cofactor. The cofactor is Mg(2+).

The enzyme catalyses (2R)-2,3-dihydroxy-3-methylbutanoate = 3-methyl-2-oxobutanoate + H2O. The catalysed reaction is (2R,3R)-2,3-dihydroxy-3-methylpentanoate = (S)-3-methyl-2-oxopentanoate + H2O. It functions in the pathway amino-acid biosynthesis; L-isoleucine biosynthesis; L-isoleucine from 2-oxobutanoate: step 3/4. The protein operates within amino-acid biosynthesis; L-valine biosynthesis; L-valine from pyruvate: step 3/4. Its function is as follows. Functions in the biosynthesis of branched-chain amino acids. Catalyzes the dehydration of (2R,3R)-2,3-dihydroxy-3-methylpentanoate (2,3-dihydroxy-3-methylvalerate) into 2-oxo-3-methylpentanoate (2-oxo-3-methylvalerate) and of (2R)-2,3-dihydroxy-3-methylbutanoate (2,3-dihydroxyisovalerate) into 2-oxo-3-methylbutanoate (2-oxoisovalerate), the penultimate precursor to L-isoleucine and L-valine, respectively. This chain is Dihydroxy-acid dehydratase 1, found in Staphylococcus saprophyticus subsp. saprophyticus (strain ATCC 15305 / DSM 20229 / NCIMB 8711 / NCTC 7292 / S-41).